Consider the following 310-residue polypeptide: O-acetylserine sulfhydrylase (310 aa).

Lys44 is modified (N6-(pyridoxal phosphate)lysine). Pyridoxal 5'-phosphate-binding positions include Asn74, 178–182 (GTGGT), and Ser266.

The protein belongs to the cysteine synthase/cystathionine beta-synthase family. As to quaternary structure, homodimer. It depends on pyridoxal 5'-phosphate as a cofactor.

It catalyses the reaction O-acetyl-L-serine + hydrogen sulfide = L-cysteine + acetate. The protein operates within amino-acid biosynthesis; L-cysteine biosynthesis; L-cysteine from L-serine: step 2/2. Its function is as follows. Catalyzes the conversion of O-acetylserine (OAS) to cysteine through the elimination of acetate and addition of hydrogen sulfide. The polypeptide is O-acetylserine sulfhydrylase (cysK) (Mycobacterium bovis (strain ATCC BAA-935 / AF2122/97)).